The sequence spans 26 residues: Aralin B chain (26 aa).

In terms of assembly, disulfide-linked dimer of A and B chains. Glycosylated. High-mannose type oligosaccharides.

In terms of biological role, lectin specific for galactose (Gal) and its derivatives. Induces apoptosis. Has cytotoxic activity against several human cancer cell lines. Is less cytotoxic to normal human cells. The polypeptide is Aralin B chain (Aralia elata (Japanese angelica tree)).